We begin with the raw amino-acid sequence, 1316 residues long: DNA-directed RNA polymerase subunit beta' (1316 aa).

4 residues coordinate Zn(2+): Cys-60, Cys-62, Cys-75, and Cys-78. Asp-535, Asp-537, and Asp-539 together coordinate Mg(2+). Cys-891, Cys-968, Cys-975, and Cys-978 together coordinate Zn(2+).

This sequence belongs to the RNA polymerase beta' chain family. The RNAP catalytic core consists of 2 alpha, 1 beta, 1 beta' and 1 omega subunit. When a sigma factor is associated with the core the holoenzyme is formed, which can initiate transcription. It depends on Mg(2+) as a cofactor. Zn(2+) is required as a cofactor.

The enzyme catalyses RNA(n) + a ribonucleoside 5'-triphosphate = RNA(n+1) + diphosphate. Its function is as follows. DNA-dependent RNA polymerase catalyzes the transcription of DNA into RNA using the four ribonucleoside triphosphates as substrates. The sequence is that of DNA-directed RNA polymerase subunit beta' from Mycobacterium marinum (strain ATCC BAA-535 / M).